The following is a 456-amino-acid chain: Equilibrative nucleoside transporter 2 (456 aa).

The Cytoplasmic portion of the chain corresponds to 1–12 (MAHGNAPRDSYH). Residues 13 to 29 (LVGISFFILGLGTLLPW) traverse the membrane as a helical segment. Residues 30–68 (NFFITAIPYFQGRLAGTNSSAETPSTNHTSPTDTFNFNN) are Extracellular-facing. Asn47 and Asn56 each carry an N-linked (GlcNAc...) asparagine glycan. Residues 69–93 (WVTLLSQLPLLLFTLLNSFLYQCIP) form a helical membrane-spanning segment. The Cytoplasmic portion of the chain corresponds to 94–97 (ESVR). Residues 98 to 116 (ILGSLLAILLLFALTAALV) form a helical membrane-spanning segment. The Extracellular portion of the chain corresponds to 117–124 (KVDLSPGL). A helical transmembrane segment spans residues 125–143 (FFSITMASVWFINSFCAVL). Residues 144–160 (QGSLFGQLGTMPSTYST) are Cytoplasmic-facing. The chain crosses the membrane as a helical span at residues 161 to 185 (LFLSGQGLAGIFAALAMLTSLASGV). Topologically, residues 186 to 192 (DPQTSAL) are extracellular. Residues 193-213 (GYFITPCVGILLSIICYLSLP) form a helical membrane-spanning segment. Residues 214–291 (HLKFARYYLT…VFVVFRKIWL (78 aa)) are Cytoplasmic-facing. The residue at position 251 (Ser251) is a Phosphoserine. Residues 292–311 (TALCLVLVFTVTLSVFPAIT) form a helical membrane-spanning segment. The Extracellular segment spans residues 312–323 (AMVTTSSNSPGK). A helical membrane pass occupies residues 324–342 (WSQFFNPICCFLLFNVMDW). Residues 343 to 359 (LGRSLTSYFLWPDEDSQ) lie on the Cytoplasmic side of the membrane. The helical transmembrane segment at 360 to 378 (LLPLLVCLRFLFVPLFMLC) threads the bilayer. Residues 379-393 (HVPQRARLPIIFWQD) are Extracellular-facing. A helical transmembrane segment spans residues 394-413 (AYFITFMLLFAISNGYFVSL). The Cytoplasmic segment spans residues 414 to 431 (TMCLAPRQVLPHEREVAG). Residues 432-452 (ALMTFFLALGLSCGASLSFLF) traverse the membrane as a helical segment. Residues 453–456 (KALL) are Extracellular-facing.

This sequence belongs to the SLC29A/ENT transporter (TC 2.A.57) family. As to expression, expressed in squeletal muscles. Expressed in testis at the blood-brain-barrier.

Its subcellular location is the apical cell membrane. The protein localises to the basolateral cell membrane. The catalysed reaction is uridine(out) = uridine(in). The enzyme catalyses inosine(in) = inosine(out). It catalyses the reaction adenosine(in) = adenosine(out). It carries out the reaction thymidine(in) = thymidine(out). The catalysed reaction is hypoxanthine(out) = hypoxanthine(in). The enzyme catalyses adenine(out) = adenine(in). It catalyses the reaction cytidine(in) = cytidine(out). It carries out the reaction thymine(out) = thymine(in). The catalysed reaction is uracil(in) = uracil(out). The enzyme catalyses guanine(out) = guanine(in). It catalyses the reaction guanosine(in) = guanosine(out). In terms of biological role, bidirectional uniporter involved in the facilitative transport of nucleosides and nucleobases, and contributes to maintaining their cellular homeostasis. Functions as a Na(+)-independent, passive transporter. Involved in the transport of nucleosides such as inosine, adenosine, uridine, thymidine, cytidine and guanosine. Also able to transport purine nucleobases (hypoxanthine, adenine, guanine) and pyrimidine nucleobases (thymine, uracil). Involved in nucleoside transport at basolateral membrane of kidney cells, allowing liver absorption of nucleoside metabolites. Mediates apical nucleoside uptake into Sertoli cells, thereby regulating the transport of nucleosides in testis across the blood-testis-barrier. Mediates both the influx and efflux of hypoxanthine in skeletal muscle microvascular endothelial cells to control the amount of intracellular hypoxanthine available for xanthine oxidase-mediated ROS production. The chain is Equilibrative nucleoside transporter 2 from Rattus norvegicus (Rat).